Consider the following 222-residue polypeptide: Charged multivesicular body protein 3 (222 aa).

G2 carries N-myristoyl glycine lipidation. The interval 2–113 is intramolecular interaction with C-terminus; the sequence is GLFGKTQEKP…LQKSTEVMKA (112 aa). Positions 22–54 form a coiled coil; it reads KIRKEMRVVDRQIRDIQREEEKVKRSVKDAAKK. Important for autoinhibitory function regions lie at residues 59–64 and 168–169; these read VCVVLA and IL. A coiled-coil region spans residues 149–222; sequence ESMDDQEEME…MQSRLATLRS (74 aa). The segment at 151-220 is intramolecular interaction with N-terminus; the sequence is MDDQEEMEEA…EAMQSRLATL (70 aa). Residues 151–222 are interaction with VPS4A; that stretch reads MDDQEEMEEA…MQSRLATLRS (72 aa). K179 participates in a covalent cross-link: Glycyl lysine isopeptide (Lys-Gly) (interchain with G-Cter in ubiquitin). Residues 180–222 are disordered; sequence APSKVTDALPEPEPLGAMAASEDEEEEEEALEAMQSRLATLRS. Interaction with STAMBP regions lie at residues 196-222, 203-207, and 221-222; these read AMAASEDEEEEEEALEAMQSRLATLRS, EEEEE, and RS. The residue at position 200 (S200) is a Phosphoserine. Positions 200 to 210 are enriched in acidic residues; the sequence is SEDEEEEEEAL. An MIT-interacting motif motif is present at residues 201–211; sequence EDEEEEEEALE.

The protein belongs to the SNF7 family. As to quaternary structure, probable core component of the endosomal sorting required for transport complex III (ESCRT-III). ESCRT-III components are thought to multimerize to form a flat lattice on the perimeter membrane of the endosome. Several assembly forms of ESCRT-III may exist that interact and act sequentially. Forms a metastable monomer in solution; its core structure (without part of the putative autoinhibitory C-terminal acidic region) oligomerizes into a flat lattice via two different dimerization interfaces. In vitro, heteromerizes with CHMP2A (but not CHMP4) to form helical tubular structures that expose membrane-interacting sites on the outside whereas VPS4B can associate on the inside of the tubule. May interact with IGFBP7; the relevance of such interaction however remains unclear. Interacts with CHMP2A. Interacts with CHMP4A; the interaction requires the release of CHMP4A autoinhibition. Interacts with VPS4A. Interacts with STAMBP; the interaction appears to relieve the autoinhibition of CHMP3. Interacts with VTA1.

The protein resides in the cytoplasm. It is found in the cytosol. The protein localises to the membrane. It localises to the endosome. Its subcellular location is the late endosome membrane. Its function is as follows. Probable core component of the endosomal sorting required for transport complex III (ESCRT-III) which is involved in multivesicular bodies (MVBs) formation and sorting of endosomal cargo proteins into MVBs. MVBs contain intraluminal vesicles (ILVs) that are generated by invagination and scission from the limiting membrane of the endosome and mostly are delivered to lysosomes enabling degradation of membrane proteins, such as stimulated growth factor receptors, lysosomal enzymes and lipids. The MVB pathway appears to require the sequential function of ESCRT-O, -I,-II and -III complexes. ESCRT-III proteins mostly dissociate from the invaginating membrane before the ILV is released. The ESCRT machinery also functions in topologically equivalent membrane fission events, such as the terminal stages of cytokinesis and the budding of enveloped viruses (lentiviruses). ESCRT-III proteins are believed to mediate the necessary vesicle extrusion and/or membrane fission activities, possibly in conjunction with the AAA ATPase VPS4. Selectively binds to phosphatidylinositol 3,5-bisphosphate PtdIns(3,5)P2 and PtdIns(3,4)P2 in preference to other phosphoinositides tested. Involved in late stages of cytokinesis. Plays a role in endosomal sorting/trafficking of EGF receptor. This Bos taurus (Bovine) protein is Charged multivesicular body protein 3 (CHMP3).